The chain runs to 434 residues: Beta-glucuronosyltransferase GlcAT14B (434 aa).

Residues 1–21 lie on the Cytoplasmic side of the membrane; sequence MKKLKSYYMQVRNQQQSLDRK. A signal-anchor for type II membrane protein membrane pass occupies residues 22 to 42; sequence WILPLAIGSICSLFLLLLTNL. Over 43-434 the chain is Lumenal; the sequence is ASSSGQTRLI…TENFRPRQCR (392 aa). Asparagine 138, asparagine 187, asparagine 316, and asparagine 392 each carry an N-linked (GlcNAc...) asparagine glycan.

This sequence belongs to the glycosyltransferase 14 family.

Its subcellular location is the golgi apparatus membrane. Its function is as follows. Beta-glucuronosyltransferase involved in the biosynthesis of type II arabinogalactan (AG). Modifies both the beta-1,6-linked galactan and beta-1,3-linked galactan present in type II AG. This is Beta-glucuronosyltransferase GlcAT14B from Arabidopsis thaliana (Mouse-ear cress).